A 396-amino-acid polypeptide reads, in one-letter code: Tryptophan synthase beta chain (396 aa).

The residue at position 88 (lysine 88) is an N6-(pyridoxal phosphate)lysine.

This sequence belongs to the TrpB family. In terms of assembly, tetramer of two alpha and two beta chains. Pyridoxal 5'-phosphate serves as cofactor.

It carries out the reaction (1S,2R)-1-C-(indol-3-yl)glycerol 3-phosphate + L-serine = D-glyceraldehyde 3-phosphate + L-tryptophan + H2O. Its pathway is amino-acid biosynthesis; L-tryptophan biosynthesis; L-tryptophan from chorismate: step 5/5. In terms of biological role, the beta subunit is responsible for the synthesis of L-tryptophan from indole and L-serine. The polypeptide is Tryptophan synthase beta chain (Actinobacillus pleuropneumoniae serotype 7 (strain AP76)).